Consider the following 908-residue polypeptide: Alanine--tRNA ligase (908 aa).

Residues His-596, His-600, Cys-698, and His-702 each contribute to the Zn(2+) site.

Belongs to the class-II aminoacyl-tRNA synthetase family. Zn(2+) serves as cofactor.

Its subcellular location is the cytoplasm. The catalysed reaction is tRNA(Ala) + L-alanine + ATP = L-alanyl-tRNA(Ala) + AMP + diphosphate. Catalyzes the attachment of alanine to tRNA(Ala) in a two-step reaction: alanine is first activated by ATP to form Ala-AMP and then transferred to the acceptor end of tRNA(Ala). Also edits incorrectly charged Ser-tRNA(Ala) and Gly-tRNA(Ala) via its editing domain. The chain is Alanine--tRNA ligase from Lysinibacillus sphaericus (strain C3-41).